A 199-amino-acid chain; its full sequence is Holliday junction branch migration complex subunit RuvA (199 aa).

The tract at residues 1-63 (MIGKLNGKID…EEHIHLYGFL (63 aa)) is domain I. A domain II region spans residues 64 to 141 (TLEEKNFFNL…TKIFSSSAII (78 aa)). The tract at residues 141–145 (IKDSN) is flexible linker. Residues 146–199 (ISSIAINEVMKALVNLGFTRFEAQNTVQGIITQNPKISIDELIKTALKNRNSSF) are domain III.

The protein belongs to the RuvA family. As to quaternary structure, homotetramer. Forms an RuvA(8)-RuvB(12)-Holliday junction (HJ) complex. HJ DNA is sandwiched between 2 RuvA tetramers; dsDNA enters through RuvA and exits via RuvB. An RuvB hexamer assembles on each DNA strand where it exits the tetramer. Each RuvB hexamer is contacted by two RuvA subunits (via domain III) on 2 adjacent RuvB subunits; this complex drives branch migration. In the full resolvosome a probable DNA-RuvA(4)-RuvB(12)-RuvC(2) complex forms which resolves the HJ.

Its subcellular location is the cytoplasm. The RuvA-RuvB-RuvC complex processes Holliday junction (HJ) DNA during genetic recombination and DNA repair, while the RuvA-RuvB complex plays an important role in the rescue of blocked DNA replication forks via replication fork reversal (RFR). RuvA specifically binds to HJ cruciform DNA, conferring on it an open structure. The RuvB hexamer acts as an ATP-dependent pump, pulling dsDNA into and through the RuvAB complex. HJ branch migration allows RuvC to scan DNA until it finds its consensus sequence, where it cleaves and resolves the cruciform DNA. The polypeptide is Holliday junction branch migration complex subunit RuvA (Rickettsia prowazekii (strain Madrid E)).